The sequence spans 416 residues: MMSAKTLTEKILSRASGKDVSPGDVIEAKVDLVAFHDLTGYHVIEVMEKANMIKVFDKSKLVIAFDHLAPPPDVRSAEIQGYIRKFVKSEGIPNFYDINYGILHEVMIEQYANPGQVILAADSHTTTSGAVGAFAQGMGASDIAAALITGKTWLVVPQPFKVVLEGKPAKWITGKDVALKLLGDFKADYFNGMTLEIFVKDPLSFPMDYRATVSNMGIEMNADALMFIPDQETKRYIKEMRGYEPELVTPDNGAKYVDEYTIQLDEMEPLVAAPHSVDNVKVVNELEGTPVDQVYIGSCTNGRLSDFEIAAKIMKGKKVKSRCIAIPASYRMFKEALERGYIQTLVDAGCIVTYGTCGPCLGGHFGIAGPGENIVSTSSRNFKGRMGSNEAKVYLSGPAVAAISALEGKITDPRVI.

Residues C299, C357, and C360 each coordinate [4Fe-4S] cluster.

It belongs to the aconitase/IPM isomerase family. LeuC type 2 subfamily. In terms of assembly, heterodimer of LeuC and LeuD. [4Fe-4S] cluster is required as a cofactor.

It catalyses the reaction (2R,3S)-3-isopropylmalate = (2S)-2-isopropylmalate. Its pathway is amino-acid biosynthesis; L-leucine biosynthesis; L-leucine from 3-methyl-2-oxobutanoate: step 2/4. Functionally, catalyzes the isomerization between 2-isopropylmalate and 3-isopropylmalate, via the formation of 2-isopropylmaleate. This chain is 3-isopropylmalate dehydratase large subunit, found in Saccharolobus solfataricus (strain ATCC 35092 / DSM 1617 / JCM 11322 / P2) (Sulfolobus solfataricus).